A 1002-amino-acid polypeptide reads, in one-letter code: Collagen alpha-2(I) chain (1002 aa).

Residues 1 to 1002 (SGGFDFSFLP…PGPPGPPGAS (1002 aa)) form a disordered region. 4-hydroxyproline is present on residues Pro10, Pro13, Pro28, and Pro34. Low complexity predominate over residues 17–60 (GPMGLMGPRGPPGASGAPGPQGFQGPAGEPGEPGQTGPAGARGP). Lys89 bears the 5-hydroxylysine; alternate mark. Lys89 carries O-linked (Gal...) hydroxylysine; alternate glycosylation. Composition is skewed to low complexity over residues 145–166 (SRGS…SAGP) and 211–232 (PGAN…AGAP). A compositionally biased stretch (gly residues) spans 266–275 (GESGGKGEPG). The span at 276-286 (SAGPQGPPGSS) shows a compositional bias: low complexity. Gly residues predominate over residues 308–317 (GLRGGPGSRG). Residues 330–346 (PAGARGASGPAGVRGPS) are compositionally biased toward low complexity. 4-hydroxyproline is present on residues Pro352 and Pro355. Over residues 381 to 400 (LPGIDGRPGPIGPAGARGEA) the composition is skewed to low complexity. Gly residues predominate over residues 449–458 (GVQGGKGEQG). 2 stretches are compositionally biased toward low complexity: residues 505 to 522 (PGES…SRGP) and 534 to 544 (EPGVVGAPGTA). Residues 545–554 (GPAGSGGLPG) show a composition bias toward gly residues. 2 stretches are compositionally biased toward low complexity: residues 577–621 (VGTT…PRGS) and 628–648 (VGPA…QPGA). Residues 649–658 (KGERGTKGPK) are compositionally biased toward basic and acidic residues. The segment covering 666 to 676 (PTGPVGSAGPA) has biased composition (low complexity). Positions 686–695 (GSRGDGGPPG) are enriched in gly residues. Low complexity predominate over residues 697–706 (TGFPGAAGRT). The span at 743–752 (GETGAGGPPG) shows a compositional bias: gly residues. Composition is skewed to low complexity over residues 760 to 787 (SGEP…LGLP) and 795 to 805 (LPGVAGAVGEP). Residues 806–828 (GPLGIGPPGARGPSGGVGPGVNG) show a composition bias toward gly residues. Residues 833-851 (AGRDGPPGRDGLPGHKGER) show a composition bias toward basic and acidic residues. Residues 853–898 (YAGNAGPVGAAGAPGPHGAVGPAGKHGNRGEPGPVGSAGPVGALGP) are compositionally biased toward low complexity. Basic and acidic residues predominate over residues 908–919 (RGDKGEAGDKGP). The span at 987–1002 (SGPPGPPGPPGPPGAS) shows a compositional bias: pro residues.

Belongs to the fibrillar collagen family. As to quaternary structure, trimers of one alpha 2(I) and two alpha 1(I) chains. Interacts (via C-terminus) with TMEM131 (via PapD-L domain); the interaction is direct and is involved in assembly and TRAPPIII ER-to-Golgi transport complex-dependent secretion of collagen. In terms of processing, prolines at the third position of the tripeptide repeating unit (G-X-Y) are hydroxylated in some or all of the chains. Expressed in bones.

The protein localises to the secreted. Its subcellular location is the extracellular space. It localises to the extracellular matrix. Functionally, type I collagen is a member of group I collagen (fibrillar forming collagen). The chain is Collagen alpha-2(I) chain from Glossotherium robustum (Ground sloth).